The chain runs to 175 residues: Co-chaperone protein HscB homolog (175 aa).

The J domain maps to 7–79 (SHFDLFDLPA…LKRATYLLHL (73 aa)).

Belongs to the HscB family. Interacts with HscA and stimulates its ATPase activity.

Functionally, co-chaperone involved in the maturation of iron-sulfur cluster-containing proteins. Seems to help targeting proteins to be folded toward HscA. The sequence is that of Co-chaperone protein HscB homolog from Paraburkholderia xenovorans (strain LB400).